A 104-amino-acid polypeptide reads, in one-letter code: L-rhamnose mutarotase (104 aa).

Tyr18 lines the substrate pocket. His22 acts as the Proton donor in catalysis. Substrate contacts are provided by residues Tyr41 and 76 to 77 (WW).

Belongs to the rhamnose mutarotase family. In terms of assembly, homodimer.

Its subcellular location is the cytoplasm. The enzyme catalyses alpha-L-rhamnose = beta-L-rhamnose. Its pathway is carbohydrate metabolism; L-rhamnose metabolism. Functionally, involved in the anomeric conversion of L-rhamnose. The chain is L-rhamnose mutarotase from Burkholderia ambifaria (strain ATCC BAA-244 / DSM 16087 / CCUG 44356 / LMG 19182 / AMMD) (Burkholderia cepacia (strain AMMD)).